Here is a 301-residue protein sequence, read N- to C-terminus: Phosphatidylglycerol--prolipoprotein diacylglyceryl transferase (301 aa).

4 helical membrane-spanning segments follow: residues 10–30 (IAFSLGPVKVHWYGLMYLAGF), 57–77 (LLFYAMMGVVLGGRVGYMLFY), 92–112 (VWEGGMSFHGGLIGVLLAVAW), and 119–139 (MHMFDVVDFCAPLVPVGLGFG). An a 1,2-diacyl-sn-glycero-3-phospho-(1'-sn-glycerol)-binding site is contributed by R140. Transmembrane regions (helical) follow at residues 202–222 (PSQLYEAFLEGLVMFIVLWLF), 230–250 (YAVSGLFALLYGVFRFLVEFV), and 264–284 (LTRGQILSLPLIVIGLFLFWL).

It belongs to the Lgt family.

Its subcellular location is the cell inner membrane. It catalyses the reaction L-cysteinyl-[prolipoprotein] + a 1,2-diacyl-sn-glycero-3-phospho-(1'-sn-glycerol) = an S-1,2-diacyl-sn-glyceryl-L-cysteinyl-[prolipoprotein] + sn-glycerol 1-phosphate + H(+). The protein operates within protein modification; lipoprotein biosynthesis (diacylglyceryl transfer). Functionally, catalyzes the transfer of the diacylglyceryl group from phosphatidylglycerol to the sulfhydryl group of the N-terminal cysteine of a prolipoprotein, the first step in the formation of mature lipoproteins. The chain is Phosphatidylglycerol--prolipoprotein diacylglyceryl transferase from Xylella fastidiosa (strain M23).